The sequence spans 396 residues: Succinyl-CoA:mesaconate CoA-transferase (396 aa).

Asp-175 acts as the Nucleophile in catalysis.

The protein belongs to the CoA-transferase III family. Homodimer.

It catalyses the reaction mesaconate + succinyl-CoA = 2-methylfumaryl-CoA + succinate. Shows highest activity at 4 M KCl. Does not require divalent ions for activity. In terms of biological role, involved in the methylaspartate cycle. Catalyzes the transfer of the CoA moiety from succinyl-CoA to mesaconate to generate mesaconyl-CoA (2-methylfumaryl-CoA) and succinate. Also shows high activity with methylsuccinate as CoA-acceptor, and only low activity with glutarate, acrylate and itaconate. Cannot use other CoA donors like acetyl-CoA, propionyl-CoA, butyryl-CoA or acetoacetyl-CoA. The sequence is that of Succinyl-CoA:mesaconate CoA-transferase from Haloarcula hispanica (strain ATCC 33960 / DSM 4426 / JCM 8911 / NBRC 102182 / NCIMB 2187 / VKM B-1755).